A 120-amino-acid polypeptide reads, in one-letter code: Aspartate 1-decarboxylase (120 aa).

S25 (schiff-base intermediate with substrate; via pyruvic acid) is an active-site residue. Pyruvic acid (Ser) is present on S25. Residue T57 coordinates substrate. Y58 acts as the Proton donor in catalysis. 73 to 75 is a substrate binding site; the sequence is GAA.

Belongs to the PanD family. In terms of assembly, heterooctamer of four alpha and four beta subunits. It depends on pyruvate as a cofactor. In terms of processing, is synthesized initially as an inactive proenzyme, which is activated by self-cleavage at a specific serine bond to produce a beta-subunit with a hydroxyl group at its C-terminus and an alpha-subunit with a pyruvoyl group at its N-terminus.

It localises to the cytoplasm. It catalyses the reaction L-aspartate + H(+) = beta-alanine + CO2. It participates in cofactor biosynthesis; (R)-pantothenate biosynthesis; beta-alanine from L-aspartate: step 1/1. Functionally, catalyzes the pyruvoyl-dependent decarboxylation of aspartate to produce beta-alanine. The sequence is that of Aspartate 1-decarboxylase from Methylibium petroleiphilum (strain ATCC BAA-1232 / LMG 22953 / PM1).